A 282-amino-acid polypeptide reads, in one-letter code: NADPH-dependent 7-cyano-7-deazaguanine reductase (282 aa).

88–90 (IES) contacts substrate. Position 90–91 (90–91 (SK)) interacts with NADPH. Cys190 serves as the catalytic Thioimide intermediate. The active-site Proton donor is the Asp197. 229 to 230 (HE) contributes to the substrate binding site. 258–259 (RG) contacts NADPH.

This sequence belongs to the GTP cyclohydrolase I family. QueF type 2 subfamily. In terms of assembly, homodimer.

The protein resides in the cytoplasm. It carries out the reaction 7-aminomethyl-7-carbaguanine + 2 NADP(+) = 7-cyano-7-deazaguanine + 2 NADPH + 3 H(+). Its pathway is tRNA modification; tRNA-queuosine biosynthesis. In terms of biological role, catalyzes the NADPH-dependent reduction of 7-cyano-7-deazaguanine (preQ0) to 7-aminomethyl-7-deazaguanine (preQ1). The polypeptide is NADPH-dependent 7-cyano-7-deazaguanine reductase (Shigella flexneri serotype 5b (strain 8401)).